Here is a 447-residue protein sequence, read N- to C-terminus: UDP-glycosyltransferase 76E5 (447 aa).

Residues Ser272, 324-326, 341-349, and 363-366 contribute to the UDP-alpha-D-glucose site; these read APQ, HCGWNSTLE, and NGEQ.

Belongs to the UDP-glycosyltransferase family.

The sequence is that of UDP-glycosyltransferase 76E5 (UGT76E5) from Arabidopsis thaliana (Mouse-ear cress).